The following is a 98-amino-acid chain: MNLYDVIKKPVITESSMAQLEAGKYVFEVDTRAHKLLIKQAVEAAFEGVKVANVNTINVKPKAKRVGRYTGFTNKTKKAIITLTADSKAIELFAAEAE.

This sequence belongs to the universal ribosomal protein uL23 family. In terms of assembly, part of the 50S ribosomal subunit. Contacts protein L29, and trigger factor when it is bound to the ribosome.

Functionally, one of the early assembly proteins it binds 23S rRNA. One of the proteins that surrounds the polypeptide exit tunnel on the outside of the ribosome. Forms the main docking site for trigger factor binding to the ribosome. This is Large ribosomal subunit protein uL23 from Streptococcus pneumoniae serotype 19F (strain G54).